We begin with the raw amino-acid sequence, 103 residues long: Muscarinic toxin BM14 (103 aa).

Residues 1–21 (MKTLLLTLVVVTIICLDLGYT) form the signal peptide. Intrachain disulfides connect Cys24-Cys45, Cys27-Cys37, Cys38-Cys72, Cys76-Cys90, and Cys91-Cys96.

The protein belongs to the three-finger toxin family. Ancestral subfamily. Orphan group XVII sub-subfamily. In terms of tissue distribution, expressed by the venom gland.

It localises to the secreted. In terms of biological role, this toxin inhibits the binding of [3H]quinuclidinyl benzilate to the M2 muscarinic acetylcholine (mAchR) receptor subtype (CHRM2). The polypeptide is Muscarinic toxin BM14 (Bungarus multicinctus (Many-banded krait)).